A 266-amino-acid chain; its full sequence is Glucosamine-6-phosphate deaminase (266 aa).

Residue Asp72 is the Proton acceptor; for enolization step of the active site. Asp141 functions as the For ring-opening step in the catalytic mechanism. His143 functions as the Proton acceptor; for ring-opening step in the catalytic mechanism. Catalysis depends on Glu148, which acts as the For ring-opening step.

The protein belongs to the glucosamine/galactosamine-6-phosphate isomerase family. NagB subfamily. As to quaternary structure, homohexamer.

It catalyses the reaction alpha-D-glucosamine 6-phosphate + H2O = beta-D-fructose 6-phosphate + NH4(+). The protein operates within amino-sugar metabolism; N-acetylneuraminate degradation; D-fructose 6-phosphate from N-acetylneuraminate: step 5/5. With respect to regulation, allosterically activated by N-acetylglucosamine 6-phosphate (GlcNAc6P). Its function is as follows. Catalyzes the reversible isomerization-deamination of glucosamine 6-phosphate (GlcN6P) to form fructose 6-phosphate (Fru6P) and ammonium ion. This is Glucosamine-6-phosphate deaminase from Salmonella typhimurium (strain LT2 / SGSC1412 / ATCC 700720).